Reading from the N-terminus, the 358-residue chain is Trace amine-associated receptor 7a (358 aa).

The Extracellular portion of the chain corresponds to 1–47 (MDKLVDHFLSDQSRTMNEDLFSATSTELCYENLNRSCVRSPYSPGPR). The N-linked (GlcNAc...) asparagine glycan is linked to asparagine 34. Disulfide bonds link cysteine 37/cysteine 201 and cysteine 120/cysteine 205. A helical transmembrane segment spans residues 48–68 (LILYAVFGFGAALAVCGNLLV). Over 69–83 (MTSILHFRQLHSPAN) the chain is Cytoplasmic. A helical membrane pass occupies residues 84-104 (FLVASLACADFLVGLTVMPFS). The Extracellular portion of the chain corresponds to 105–121 (TVRSVEGCWYFGESYCK). The helical transmembrane segment at 122–143 (FHSCFEGSFCYSSIFHLCFISV) threads the bilayer. Topologically, residues 144–166 (DRYIAVSDPLTYPTRFTASVSGK) are cytoplasmic. A helical transmembrane segment spans residues 167-187 (CITFSWLLSIIYSFSLLYTGA). Over 188 to 212 (NEAGLEDLVSVLTCVGGCQIAVNQS) the chain is Extracellular. An N-linked (GlcNAc...) asparagine glycan is attached at asparagine 210. The chain crosses the membrane as a helical span at residues 213-233 (WVFINFLLFLIPTLVMMTVYS). At 234-274 (KIFLIAKQQAQNIEKMSKQTARASESYKDRVAKRERKAAKT) the chain is on the cytoplasmic side. A helical transmembrane segment spans residues 275–295 (LGIAVAAFLLSWLPYFIDSII). The Extracellular portion of the chain corresponds to 296–309 (DAFLGFITPTYVYE). Residues 310-333 (ILVWIAYYNSAMNPLIYAFFYPWF) traverse the membrane as a helical segment. Over 334-358 (RKAIKLIVTGKILRENSSTTNLFPE) the chain is Cytoplasmic.

This sequence belongs to the G-protein coupled receptor 1 family. As to expression, specifically expressed in neurons of the olfactory epithelium.

Its subcellular location is the cell membrane. Functionally, olfactory receptor specific for N,N-dimethylalkylamines trace amines. Trace amine compounds are enriched in animal body fluids and act on trace amine-associated receptors (TAARs) to elicit both intraspecific and interspecific innate behaviors. Ligand-binding causes a conformation change that triggers signaling via G(s)-class of G alpha proteins (GNAL or GNAS). The polypeptide is Trace amine-associated receptor 7a (Mus musculus (Mouse)).